A 71-amino-acid polypeptide reads, in one-letter code: uncharacterized protein (71 aa).

The helical transmembrane segment at Gly12–Thr34 threads the bilayer.

The protein resides in the membrane. This is an uncharacterized protein from Dictyostelium discoideum (Social amoeba).